The chain runs to 342 residues: Biotin synthase (342 aa).

The Radical SAM core domain occupies 36–260 (NRIQISTLLS…MMPKSYIRLS (225 aa)). [4Fe-4S] cluster contacts are provided by cysteine 51, cysteine 55, and cysteine 58. Residues cysteine 95, cysteine 126, cysteine 186, and arginine 258 each coordinate [2Fe-2S] cluster.

It belongs to the radical SAM superfamily. Biotin synthase family. In terms of assembly, homodimer. Requires [4Fe-4S] cluster as cofactor. [2Fe-2S] cluster serves as cofactor.

The enzyme catalyses (4R,5S)-dethiobiotin + (sulfur carrier)-SH + 2 reduced [2Fe-2S]-[ferredoxin] + 2 S-adenosyl-L-methionine = (sulfur carrier)-H + biotin + 2 5'-deoxyadenosine + 2 L-methionine + 2 oxidized [2Fe-2S]-[ferredoxin]. Its pathway is cofactor biosynthesis; biotin biosynthesis; biotin from 7,8-diaminononanoate: step 2/2. Functionally, catalyzes the conversion of dethiobiotin (DTB) to biotin by the insertion of a sulfur atom into dethiobiotin via a radical-based mechanism. The polypeptide is Biotin synthase (Buchnera aphidicola subsp. Schizaphis graminum (strain Sg)).